The following is a 208-amino-acid chain: Small ribosomal subunit protein uS4A (208 aa).

An S4 RNA-binding domain is found at 98–164; it reads TRLDNVVYTL…AKIQSAIQAV (67 aa).

It belongs to the universal ribosomal protein uS4 family. As to quaternary structure, part of the 30S ribosomal subunit. Contacts protein S5. The interaction surface between S4 and S5 is involved in control of translational fidelity.

Functionally, one of the primary rRNA binding proteins, it binds directly to 16S rRNA where it nucleates assembly of the body of the 30S subunit. In terms of biological role, with S5 and S12 plays an important role in translational accuracy. This Bdellovibrio bacteriovorus (strain ATCC 15356 / DSM 50701 / NCIMB 9529 / HD100) protein is Small ribosomal subunit protein uS4A.